Consider the following 520-residue polypeptide: Anthranilate synthase component 1 (520 aa).

Residues serine 40, lysine 50, and 291–293 (PYM) contribute to the L-tryptophan site. 328 to 329 (GT) contacts chorismate. Position 361 (glutamate 361) interacts with Mg(2+). Residues tyrosine 449, arginine 469, 483–485 (GAG), and glycine 485 each bind chorismate. Mg(2+) is bound at residue glutamate 498.

The protein belongs to the anthranilate synthase component I family. In terms of assembly, homodimer. In fact, exists in a monomer-dimer equilibrium in solution, shifted spontaneously in favor of the dimer; the monomer has a reduced activity compared with the dimer. Heterotetramer consisting of two non-identical subunits: a beta subunit (TrpG) and a large alpha subunit (TrpE) (Potential). Mg(2+) is required as a cofactor.

The catalysed reaction is chorismate + L-glutamine = anthranilate + pyruvate + L-glutamate + H(+). It functions in the pathway amino-acid biosynthesis; L-tryptophan biosynthesis; L-tryptophan from chorismate: step 1/5. Cooperatively feedback inhibited by tryptophan. Functionally, part of a heterotetrameric complex that catalyzes the two-step biosynthesis of anthranilate, an intermediate in the biosynthesis of L-tryptophan. In the first step, the glutamine-binding beta subunit (TrpG) of anthranilate synthase (AS) provides the glutamine amidotransferase activity which generates ammonia as a substrate that, along with chorismate, is used in the second step, catalyzed by the large alpha subunit of AS (TrpE) to produce anthranilate. In the absence of TrpG, TrpE can synthesize anthranilate directly from chorismate and high concentrations of ammonia. This chain is Anthranilate synthase component 1 (trpE), found in Salmonella typhimurium (strain LT2 / SGSC1412 / ATCC 700720).